Consider the following 156-residue polypeptide: Transcription elongation factor GreA (156 aa).

Residues 1–84 (MAKYTISKHR…IEDVMRSTDE (84 aa)) are a coiled coil.

It belongs to the GreA/GreB family.

Its function is as follows. Necessary for efficient RNA polymerase transcription elongation past template-encoded arresting sites. The arresting sites in DNA have the property of trapping a certain fraction of elongating RNA polymerases that pass through, resulting in locked ternary complexes. Cleavage of the nascent transcript by cleavage factors such as GreA or GreB allows the resumption of elongation from the new 3'terminus. GreA releases sequences of 2 to 3 nucleotides. This chain is Transcription elongation factor GreA, found in Ureaplasma urealyticum serovar 10 (strain ATCC 33699 / Western).